The following is a 276-amino-acid chain: Putative E3 ubiquitin-protein ligase SINA-like 9 (276 aa).

The RING-type zinc-finger motif lies at 38–74 (CPICCEALTSPIFQCDNGHLACGSCCPKLSNKCPACT). Residues 88–274 (VLESILIPCP…MQVFIIENVD (187 aa)) form an SBD region. The SIAH-type zinc finger occupies 91 to 149 (SILIPCPNVRFGCTKSFFYGKESAHEKECIFSQCSCPSSVCDYTGSYKDLYAHYKLTHS). Residues C96, C103, H115, C119, C126, C131, H143, and H148 each coordinate Zn(2+).

Belongs to the SINA (Seven in absentia) family.

The catalysed reaction is S-ubiquitinyl-[E2 ubiquitin-conjugating enzyme]-L-cysteine + [acceptor protein]-L-lysine = [E2 ubiquitin-conjugating enzyme]-L-cysteine + N(6)-ubiquitinyl-[acceptor protein]-L-lysine.. Its pathway is protein modification; protein ubiquitination. E3 ubiquitin-protein ligase that mediates ubiquitination and subsequent proteasomal degradation of target proteins. E3 ubiquitin ligases accept ubiquitin from an E2 ubiquitin-conjugating enzyme in the form of a thioester and then directly transfers the ubiquitin to targeted substrates. It probably triggers the ubiquitin-mediated degradation of different substrates. The protein is Putative E3 ubiquitin-protein ligase SINA-like 9 of Arabidopsis thaliana (Mouse-ear cress).